We begin with the raw amino-acid sequence, 134 residues long: ATP synthase epsilon chain (134 aa).

It belongs to the ATPase epsilon chain family. In terms of assembly, F-type ATPases have 2 components, CF(1) - the catalytic core - and CF(0) - the membrane proton channel. CF(1) has five subunits: alpha(3), beta(3), gamma(1), delta(1), epsilon(1). CF(0) has three main subunits: a, b and c.

Its subcellular location is the cell membrane. In terms of biological role, produces ATP from ADP in the presence of a proton gradient across the membrane. The protein is ATP synthase epsilon chain of Listeria monocytogenes serotype 4b (strain F2365).